The sequence spans 618 residues: Camphene synthase, chloroplastic (618 aa).

Residues 1-51 (MALLSITPLVSRSCLSSSHEIKALRRTIPTLGICRPGKSVAHSINMCLTSV) constitute a chloroplast transit peptide. Residues D369, D373, and D521 each coordinate Mg(2+). Positions 369–373 (DDMYD) match the DDXXD motif motif.

It belongs to the terpene synthase family. Tpsd subfamily. It depends on Mg(2+) as a cofactor. The cofactor is Mn(2+). Requires K(+) as cofactor.

The protein resides in the plastid. The protein localises to the chloroplast. The enzyme catalyses (2E)-geranyl diphosphate = (1S,4R)-camphene + diphosphate. It functions in the pathway terpene metabolism; oleoresin biosynthesis. Functionally, involved in defensive oleoresin formation in conifers in response to insect attack or other injury. Involved in monoterpene (C10) olefins biosynthesis. The protein is Camphene synthase, chloroplastic (ag6) of Abies grandis (Grand fir).